Consider the following 160-residue polypeptide: Ribosomal RNA large subunit methyltransferase H (160 aa).

S-adenosyl-L-methionine contacts are provided by residues Leu-78, Gly-109, and 128-133 (LSNLTL).

This sequence belongs to the RNA methyltransferase RlmH family. As to quaternary structure, homodimer.

It localises to the cytoplasm. The catalysed reaction is pseudouridine(1915) in 23S rRNA + S-adenosyl-L-methionine = N(3)-methylpseudouridine(1915) in 23S rRNA + S-adenosyl-L-homocysteine + H(+). Functionally, specifically methylates the pseudouridine at position 1915 (m3Psi1915) in 23S rRNA. This is Ribosomal RNA large subunit methyltransferase H from Alcanivorax borkumensis (strain ATCC 700651 / DSM 11573 / NCIMB 13689 / SK2).